The following is a 445-amino-acid chain: Beclin-1 (445 aa).

A BH3 motif is present at residues T103–S122. Residues D137 to V264 are a coiled coil. Residues D240–K445 are evolutionary conserved domain (ECD). The interval W420 to K445 is required for membrane-association.

It belongs to the beclin family. Component of the PI3K (PI3KC3/PI3K-III/class III phosphatidylinositol 3-kinase) complex. Post-translationally, may be proteolytically processed by caspases; the C-terminal fragment(s) may induce apoptosis.

It localises to the cytoplasm. It is found in the golgi apparatus. The protein resides in the trans-Golgi network membrane. The protein localises to the endosome membrane. Its subcellular location is the endoplasmic reticulum membrane. It localises to the mitochondrion membrane. It is found in the cytoplasmic vesicle. The protein resides in the autophagosome. Its function is as follows. Plays a central role in autophagy. Acts as core subunit of different PI3K complex forms that mediate formation of phosphatidylinositol 3-phosphate and are believed to play a role in multiple membrane trafficking pathways: PI3KC3-C1 is involved in initiation of autophagosomes and PI3KC3-C2 in maturation of autophagosomes and endocytosis. Involved in regulation of degradative endocytic trafficking and required for the abscission step in cytokinesis, probably in the context of PI3KC3-C2. Essential for the formation of PI3KC3-C2 but not PI3KC3-C1 PI3K complex forms. Involved in endocytosis including endosome formation in neuronal cells. In Xenopus laevis (African clawed frog), this protein is Beclin-1 (becn1).